Consider the following 363-residue polypeptide: Regulator of G-protein signaling rgs-3 (363 aa).

The disordered stretch occupies residues methionine 1 to serine 70. Positions leucine 21–glutamine 35 are enriched in basic and acidic residues. Low complexity-rich tracts occupy residues serine 36–serine 50 and proline 58–serine 70. 2 RGS domains span residues asparagine 112–leucine 225 and serine 240–leucine 359.

In terms of processing, may be phosphorylated and activated by egl-4.

Functionally, modulates chemotaxis responses by regulating positively the sensitivity to CO2 levels in BAG neurons and by regulating negatively the sensitivity to quinine in ASH sensory neurons. In Caenorhabditis elegans, this protein is Regulator of G-protein signaling rgs-3 (rgs-3).